A 201-amino-acid polypeptide reads, in one-letter code: Small ribosomal subunit protein uS4c (201 aa).

The segment at 15–44 (LGALPGLTNKRPRAGSDLRNQSRSGKKSQY) is disordered. The S4 RNA-binding domain occupies 89–149 (MRLDNILFRL…DEQKSRALIQ (61 aa)).

It belongs to the universal ribosomal protein uS4 family. Part of the 30S ribosomal subunit. Contacts protein S5. The interaction surface between S4 and S5 is involved in control of translational fidelity.

Its subcellular location is the plastid. The protein resides in the chloroplast. Its function is as follows. One of the primary rRNA binding proteins, it binds directly to 16S rRNA where it nucleates assembly of the body of the 30S subunit. With S5 and S12 plays an important role in translational accuracy. This chain is Small ribosomal subunit protein uS4c (rps4), found in Helianthus annuus (Common sunflower).